The following is a 496-amino-acid chain: Probable serine/threonine-protein kinase DDB_G0284251 (496 aa).

Positions 1–13 (MIEINNNHNNGNG) are enriched in low complexity. The disordered stretch occupies residues 1–25 (MIEINNNHNNGNGKQFPSSQIMPDS). Positions 36–288 (YTLGEKIGRG…AQELLQHPIF (253 aa)) constitute a Protein kinase domain. ATP is bound by residues 42–50 (IGRGAFGQV) and K65. Catalysis depends on D158, which acts as the Proton acceptor. A disordered region spans residues 323–345 (DWGSSSSTSGSSTPLSSSSSSSN). The stretch at 353 to 386 (EDFNKLQTTIKQQAQTISNLSEEILILKKELKEK) forms a coiled coil. The tract at residues 454-496 (PQLTPSSSRENISLSNSSSSIPNPNQNQNQNNKSKSKKFGFFS) is disordered. Low complexity predominate over residues 458-486 (PSSSRENISLSNSSSSIPNPNQNQNQNNK). Basic residues predominate over residues 487-496 (SKSKKFGFFS).

This sequence belongs to the protein kinase superfamily. STE Ser/Thr protein kinase family. The cofactor is Mg(2+).

The enzyme catalyses L-seryl-[protein] + ATP = O-phospho-L-seryl-[protein] + ADP + H(+). It catalyses the reaction L-threonyl-[protein] + ATP = O-phospho-L-threonyl-[protein] + ADP + H(+). The chain is Probable serine/threonine-protein kinase DDB_G0284251 from Dictyostelium discoideum (Social amoeba).